Reading from the N-terminus, the 275-residue chain is NH(3)-dependent NAD(+) synthetase (275 aa).

An ATP-binding site is contributed by 46–53; it reads GISGGQDS. Asp-52 contacts Mg(2+). Deamido-NAD(+) is bound at residue Arg-140. Thr-160 is a binding site for ATP. Glu-165 provides a ligand contact to Mg(2+). Lys-173 and Asp-180 together coordinate deamido-NAD(+). ATP contacts are provided by Lys-189 and Thr-211. Residue 260–261 participates in deamido-NAD(+) binding; it reads HK.

It belongs to the NAD synthetase family. As to quaternary structure, homodimer.

The catalysed reaction is deamido-NAD(+) + NH4(+) + ATP = AMP + diphosphate + NAD(+) + H(+). The protein operates within cofactor biosynthesis; NAD(+) biosynthesis; NAD(+) from deamido-NAD(+) (ammonia route): step 1/1. In terms of biological role, catalyzes the ATP-dependent amidation of deamido-NAD to form NAD. Uses ammonia as a nitrogen source. This chain is NH(3)-dependent NAD(+) synthetase, found in Escherichia coli O157:H7.